Consider the following 460-residue polypeptide: ATP synthase subunit beta (460 aa).

150-157 (GGAGVGKT) lines the ATP pocket.

The protein belongs to the ATPase alpha/beta chains family. As to quaternary structure, F-type ATPases have 2 components, CF(1) - the catalytic core - and CF(0) - the membrane proton channel. CF(1) has five subunits: alpha(3), beta(3), gamma(1), delta(1), epsilon(1). CF(0) has three main subunits: a(1), b(2) and c(9-12). The alpha and beta chains form an alternating ring which encloses part of the gamma chain. CF(1) is attached to CF(0) by a central stalk formed by the gamma and epsilon chains, while a peripheral stalk is formed by the delta and b chains.

The protein localises to the cell inner membrane. It carries out the reaction ATP + H2O + 4 H(+)(in) = ADP + phosphate + 5 H(+)(out). Its function is as follows. Produces ATP from ADP in the presence of a proton gradient across the membrane. The catalytic sites are hosted primarily by the beta subunits. The polypeptide is ATP synthase subunit beta (Pectobacterium atrosepticum (strain SCRI 1043 / ATCC BAA-672) (Erwinia carotovora subsp. atroseptica)).